Here is a 339-residue protein sequence, read N- to C-terminus: MNQRNASMTVIGAGSYGTALAITLARNGHEVVLWGHDPEHIATLERDRCNAAFLPDVPFPDTLHLESDLATALAASRNILVVVPSHVFGEVLRQIKPLMRPDARLVWATKGLEAETGRLLQDVAREALGDHIPLAVISGPTFAKELAAGLPTAISLASTDQTFADDLQQLLHCGKSFRVYSNPDFIGVQLGGAVKNVIAIGAGMSDGIGFGANARTALITRGLAEMSRLGAALGADPATFMGMAGLGDLVLTCTDNQSRNRRFGMMLGQGMDVQSAQEKIGQVVEGYRNTKEVRELAHRFGVEMPITEEIYQVLYCGKNAREAALTLLGRARKDERSSH.

Residues Ser-15, Tyr-16, His-36, and Lys-110 each coordinate NADPH. Sn-glycerol 3-phosphate is bound by residues Lys-110, Gly-139, and Thr-141. Ala-143 contributes to the NADPH binding site. Residues Lys-195, Asp-248, Ser-258, Arg-259, and Asn-260 each contribute to the sn-glycerol 3-phosphate site. The active-site Proton acceptor is Lys-195. Residue Arg-259 coordinates NADPH. NADPH contacts are provided by Val-283 and Glu-285.

The protein belongs to the NAD-dependent glycerol-3-phosphate dehydrogenase family.

The protein localises to the cytoplasm. It catalyses the reaction sn-glycerol 3-phosphate + NAD(+) = dihydroxyacetone phosphate + NADH + H(+). The enzyme catalyses sn-glycerol 3-phosphate + NADP(+) = dihydroxyacetone phosphate + NADPH + H(+). Its pathway is membrane lipid metabolism; glycerophospholipid metabolism. Its function is as follows. Catalyzes the reduction of the glycolytic intermediate dihydroxyacetone phosphate (DHAP) to sn-glycerol 3-phosphate (G3P), the key precursor for phospholipid synthesis. The protein is Glycerol-3-phosphate dehydrogenase [NAD(P)+] of Escherichia coli O17:K52:H18 (strain UMN026 / ExPEC).